The chain runs to 609 residues: Granule-bound starch synthase 1, chloroplastic/amyloplastic (609 aa).

The N-terminal 77 residues, 1-77 (MSALTTSQLA…SRRFPSVVVY (77 aa)), are a transit peptide targeting the chloroplast. The interval 29-67 (RHGFQGLKPRSPAGGDATSLSVTTSARATPKQQRSVQRG) is disordered. Polar residues predominate over residues 46-66 (TSLSVTTSARATPKQQRSVQR). Lysine 97 lines the ADP-alpha-D-glucose pocket.

It belongs to the glycosyltransferase 1 family. Bacterial/plant glycogen synthase subfamily.

The protein resides in the plastid. Its subcellular location is the chloroplast. The protein localises to the amyloplast. The enzyme catalyses an NDP-alpha-D-glucose + [(1-&gt;4)-alpha-D-glucosyl](n) = [(1-&gt;4)-alpha-D-glucosyl](n+1) + a ribonucleoside 5'-diphosphate + H(+). It functions in the pathway glycan biosynthesis; starch biosynthesis. Its function is as follows. Required for the synthesis of amylose in endosperm. In Oryza glaberrima (African rice), this protein is Granule-bound starch synthase 1, chloroplastic/amyloplastic (WAXY).